The sequence spans 185 residues: Translocon-associated protein subunit gamma (185 aa).

An N-acetylmethionine modification is found at methionine 1. Residues 1 to 27 (MAPKGGSKQQSEEDLLLQDFSRNLSAK) lie on the Lumenal side of the membrane. Serine 7 and serine 11 each carry phosphoserine. Residues 28–48 (SSALFFGNAFIVSAIPIWLYW) form a helical membrane-spanning segment. Over 49-54 (RIWHMD) the chain is Cytoplasmic. Residues 55–76 (LIQSAVLYSVMTLVSTYLVAFA) form a helical membrane-spanning segment. The Lumenal portion of the chain corresponds to 77–135 (YKNVKFVLKHKVAQKREDAVSKEVTRKLSEADNRKMSRKEKDERILWKKNEVADYEATT). Serine 105 is subject to Phosphoserine. A helical transmembrane segment spans residues 136–157 (FSIFYNNTLFLVLVIVASFFIL). The Cytoplasmic segment spans residues 158–163 (KNFNPT). Residues 164-184 (VNYILSISASSGLIALLSTGS) traverse the membrane as a helical segment.

This sequence belongs to the TRAP-gamma family. As to quaternary structure, heterotetramer of TRAP-alpha, TRAP-beta, TRAP-delta and TRAP-gamma.

The protein localises to the endoplasmic reticulum membrane. In terms of biological role, TRAP proteins are part of a complex whose function is to bind calcium to the ER membrane and thereby regulate the retention of ER resident proteins. This Mus musculus (Mouse) protein is Translocon-associated protein subunit gamma (Ssr3).